Here is a 513-residue protein sequence, read N- to C-terminus: ATP synthase subunit alpha (513 aa).

169 to 176 (GDRQTGKT) is a binding site for ATP.

This sequence belongs to the ATPase alpha/beta chains family. F-type ATPases have 2 components, CF(1) - the catalytic core - and CF(0) - the membrane proton channel. CF(1) has five subunits: alpha(3), beta(3), gamma(1), delta(1), epsilon(1). CF(0) has three main subunits: a(1), b(2) and c(9-12). The alpha and beta chains form an alternating ring which encloses part of the gamma chain. CF(1) is attached to CF(0) by a central stalk formed by the gamma and epsilon chains, while a peripheral stalk is formed by the delta and b chains.

It is found in the cell inner membrane. It catalyses the reaction ATP + H2O + 4 H(+)(in) = ADP + phosphate + 5 H(+)(out). Its function is as follows. Produces ATP from ADP in the presence of a proton gradient across the membrane. The alpha chain is a regulatory subunit. This Proteus mirabilis (strain HI4320) protein is ATP synthase subunit alpha.